The primary structure comprises 274 residues: Hydroxyethylthiazole kinase (274 aa).

Methionine 51 contributes to the substrate binding site. The ATP site is built by arginine 127 and serine 173. A substrate-binding site is contributed by glycine 200.

It belongs to the Thz kinase family. Mg(2+) serves as cofactor.

The catalysed reaction is 5-(2-hydroxyethyl)-4-methylthiazole + ATP = 4-methyl-5-(2-phosphooxyethyl)-thiazole + ADP + H(+). Its pathway is cofactor biosynthesis; thiamine diphosphate biosynthesis; 4-methyl-5-(2-phosphoethyl)-thiazole from 5-(2-hydroxyethyl)-4-methylthiazole: step 1/1. In terms of biological role, catalyzes the phosphorylation of the hydroxyl group of 4-methyl-5-beta-hydroxyethylthiazole (THZ). In Photobacterium profundum (strain SS9), this protein is Hydroxyethylthiazole kinase.